Here is a 249-residue protein sequence, read N- to C-terminus: Large ribosomal subunit protein uL10m (249 aa).

The transit peptide at 1 to 31 (MLQLRFMPGWVPRNGFFGLKETIGTVHKRFY) directs the protein to the mitochondrion. The disordered stretch occupies residues 226-249 (SHNDNQKPKEDVESTTDAESKGSK).

Belongs to the universal ribosomal protein uL10 family. Component of the mitochondrial large ribosomal subunit (mt-LSU). Mature yeast 74S mitochondrial ribosomes consist of a small (37S) and a large (54S) subunit. The 37S small subunit contains a 15S ribosomal RNA (15S mt-rRNA) and 34 different proteins. The 54S large subunit contains a 21S rRNA (21S mt-rRNA) and 46 different proteins.

It localises to the mitochondrion. In terms of biological role, component of the mitochondrial ribosome (mitoribosome), a dedicated translation machinery responsible for the synthesis of mitochondrial genome-encoded proteins, including at least some of the essential transmembrane subunits of the mitochondrial respiratory chain. The mitoribosomes are attached to the mitochondrial inner membrane and translation products are cotranslationally integrated into the membrane. This is Large ribosomal subunit protein uL10m (MRPL11) from Saccharomyces cerevisiae (strain ATCC 204508 / S288c) (Baker's yeast).